The following is a 187-amino-acid chain: Elongation factor P (187 aa).

It belongs to the elongation factor P family.

The protein localises to the cytoplasm. It functions in the pathway protein biosynthesis; polypeptide chain elongation. Functionally, involved in peptide bond synthesis. Stimulates efficient translation and peptide-bond synthesis on native or reconstituted 70S ribosomes in vitro. Probably functions indirectly by altering the affinity of the ribosome for aminoacyl-tRNA, thus increasing their reactivity as acceptors for peptidyl transferase. The polypeptide is Elongation factor P (Kocuria rhizophila (strain ATCC 9341 / DSM 348 / NBRC 103217 / DC2201)).